The sequence spans 256 residues: Cell division protein FtsQ (256 aa).

At 1 to 23 (MIKAVKMNTSFDKEKVRKHLPGA) the chain is on the cytoplasmic side. A helical transmembrane segment spans residues 24-44 (IFLSLVVITSLWLVISTISWM). The Periplasmic segment spans residues 45–256 (TDEDRLPLSH…SDDVENKEEN (212 aa)). Residues 50–120 (LPLSHMIIQG…ETIKVFVVEH (71 aa)) enclose the POTRA domain.

This sequence belongs to the FtsQ/DivIB family. FtsQ subfamily. In terms of assembly, part of a complex composed of FtsB, FtsL and FtsQ.

The protein localises to the cell inner membrane. Functionally, essential cell division protein. May link together the upstream cell division proteins, which are predominantly cytoplasmic, with the downstream cell division proteins, which are predominantly periplasmic. May control correct divisome assembly. This Aliivibrio fischeri (strain ATCC 700601 / ES114) (Vibrio fischeri) protein is Cell division protein FtsQ.